Here is a 212-residue protein sequence, read N- to C-terminus: MKKIPRIGVGGPVGSGKMAIIEAVVPILIKLGYRILVITNDIVTTEDAKHVQRTLKGVLIEDRIVGVETGGCPHTAVREDPSMNLAAVEEMEAKFPDTDLVLLESGGDNLTLTFSPALIDFFIYVIDVAAGDKIPCKNGPGISQSDILVINKTDLAPYVGASLQVMDDDSRMMRGKKPFVFTNCKTNEGIDDLVHLIRENVLFDTEVSKESA.

A GTP-binding site is contributed by 11 to 18 (GPVGSGKM).

Belongs to the SIMIBI class G3E GTPase family. UreG subfamily. In terms of assembly, homodimer. UreD, UreF and UreG form a complex that acts as a GTP-hydrolysis-dependent molecular chaperone, activating the urease apoprotein by helping to assemble the nickel containing metallocenter of UreC. The UreE protein probably delivers the nickel.

It localises to the cytoplasm. Functionally, facilitates the functional incorporation of the urease nickel metallocenter. This process requires GTP hydrolysis, probably effectuated by UreG. Disrupting the ure2 operon has no effect on urease activity, or pathogen survival in BALB/c mice when inoculated by gavage, but confers slightly enhanced resistance to low pH killing in vitro. This Brucella suis biovar 1 (strain 1330) protein is Urease accessory protein UreG 2.